The chain runs to 147 residues: D-aminoacyl-tRNA deacylase (147 aa).

The Gly-cisPro motif, important for rejection of L-amino acids motif lies at 136 to 137; the sequence is GP.

It belongs to the DTD family. As to quaternary structure, homodimer.

It is found in the cytoplasm. The enzyme catalyses glycyl-tRNA(Ala) + H2O = tRNA(Ala) + glycine + H(+). It carries out the reaction a D-aminoacyl-tRNA + H2O = a tRNA + a D-alpha-amino acid + H(+). Functionally, an aminoacyl-tRNA editing enzyme that deacylates mischarged D-aminoacyl-tRNAs. Also deacylates mischarged glycyl-tRNA(Ala), protecting cells against glycine mischarging by AlaRS. Acts via tRNA-based rather than protein-based catalysis; rejects L-amino acids rather than detecting D-amino acids in the active site. By recycling D-aminoacyl-tRNA to D-amino acids and free tRNA molecules, this enzyme counteracts the toxicity associated with the formation of D-aminoacyl-tRNA entities in vivo and helps enforce protein L-homochirality. The sequence is that of D-aminoacyl-tRNA deacylase from Streptococcus pyogenes serotype M1.